We begin with the raw amino-acid sequence, 202 residues long: Arenicin-2 (202 aa).

The first 25 residues, M1–C25, serve as a signal peptide directing secretion. A propeptide spanning residues D26 to R181 is cleaved from the precursor. Residues G73–L168 enclose the BRICHOS domain. Disulfide bonds link C100-C160 and C184-C201.

In terms of biological role, has antimicrobial activity against the Gram-negative bacteria E.coli and P.mirabilis, the Gram-positive bacterium L.monocytogenes and the yeast C.albicans. The protein is Arenicin-2 of Arenicola marina (Lugworm).